A 217-amino-acid polypeptide reads, in one-letter code: Monomethylamine corrinoid protein 1 (217 aa).

Positions 1–91 (MANQEIFDKL…ELEKNKKEGE (91 aa)) constitute a B12-binding N-terminal domain. The B12-binding domain maps to 93-217 (AGLAITFVAE…AAKVALEVMK (125 aa)). Position 106 (His-106) interacts with methylcob(III)alamin.

As to quaternary structure, can form a complex with MtmB.

It functions in the pathway one-carbon metabolism; methanogenesis from methylamine. In terms of biological role, acts as a methyl group carrier between MtmB and MtbA. The polypeptide is Monomethylamine corrinoid protein 1 (mtmC1) (Methanosarcina barkeri).